Here is a 201-residue protein sequence, read N- to C-terminus: Acireductone dioxygenase 2 (201 aa).

Positions 83, 85, 89, and 129 each coordinate Fe(2+). 4 residues coordinate Ni(2+): H83, H85, E89, and H129.

The protein belongs to the acireductone dioxygenase (ARD) family. Fe(2+) serves as cofactor. Ni(2+) is required as a cofactor.

The protein localises to the cytoplasm. It is found in the nucleus. It catalyses the reaction 1,2-dihydroxy-5-(methylsulfanyl)pent-1-en-3-one + O2 = 4-methylsulfanyl-2-oxobutanoate + formate + 2 H(+). The enzyme catalyses 1,2-dihydroxy-5-(methylsulfanyl)pent-1-en-3-one + O2 = 3-(methylsulfanyl)propanoate + CO + formate + 2 H(+). Its pathway is amino-acid biosynthesis; L-methionine biosynthesis via salvage pathway; L-methionine from S-methyl-5-thio-alpha-D-ribose 1-phosphate: step 5/6. In terms of biological role, catalyzes 2 different reactions between oxygen and the acireductone 1,2-dihydroxy-3-keto-5-methylthiopentene (DHK-MTPene) depending upon the metal bound in the active site. Fe-containing acireductone dioxygenase (Fe-ARD) produces formate and 2-keto-4-methylthiobutyrate (KMTB), the alpha-ketoacid precursor of methionine in the methionine recycle pathway. Ni-containing acireductone dioxygenase (Ni-ARD) produces methylthiopropionate, carbon monoxide and formate, and does not lie on the methionine recycle pathway. The sequence is that of Acireductone dioxygenase 2 from Coprinopsis cinerea (strain Okayama-7 / 130 / ATCC MYA-4618 / FGSC 9003) (Inky cap fungus).